A 296-amino-acid polypeptide reads, in one-letter code: GTPase Era (296 aa).

Positions 7 to 174 constitute an Era-type G domain; that stretch reads KAGYISIVGR…TEVIRHYLPE (168 aa). Residues 15–22 form a G1 region; that stretch reads GRPNVGKS. Residue 15 to 22 participates in GTP binding; it reads GRPNVGKS. Residues 41 to 45 form a G2 region; it reads QTTRH. The interval 62–65 is G3; the sequence is DTPG. GTP contacts are provided by residues 62 to 66 and 123 to 126; these read DTPGF and NKID. Residues 123-126 are G4; it reads NKID. Residues 153 to 155 are G5; that stretch reads VSA. The 77-residue stretch at 205-281 folds into the KH type-2 domain; that stretch reads IGEEVPYSVS…YLEIWVKVKS (77 aa).

It belongs to the TRAFAC class TrmE-Era-EngA-EngB-Septin-like GTPase superfamily. Era GTPase family. In terms of assembly, monomer.

Its subcellular location is the cytoplasm. The protein resides in the cell inner membrane. Functionally, an essential GTPase that binds both GDP and GTP, with rapid nucleotide exchange. Plays a role in 16S rRNA processing and 30S ribosomal subunit biogenesis and possibly also in cell cycle regulation and energy metabolism. The chain is GTPase Era from Nitrosomonas eutropha (strain DSM 101675 / C91 / Nm57).